We begin with the raw amino-acid sequence, 399 residues long: uncharacterized protein (399 aa).

Polar residues predominate over residues 197–206 (ENSSASSVTS). Residues 197-224 (ENSSASSVTSEECEQDVMDEQSAEDNEE) are disordered. Positions 207-224 (EECEQDVMDEQSAEDNEE) are enriched in acidic residues.

This is an uncharacterized protein from Diadromus pulchellus (Parasitic wasp).